The following is a 253-amino-acid chain: Aspartate/glutamate leucyltransferase (253 aa).

This sequence belongs to the R-transferase family. Bpt subfamily.

The protein localises to the cytoplasm. The enzyme catalyses N-terminal L-glutamyl-[protein] + L-leucyl-tRNA(Leu) = N-terminal L-leucyl-L-glutamyl-[protein] + tRNA(Leu) + H(+). It carries out the reaction N-terminal L-aspartyl-[protein] + L-leucyl-tRNA(Leu) = N-terminal L-leucyl-L-aspartyl-[protein] + tRNA(Leu) + H(+). Functionally, functions in the N-end rule pathway of protein degradation where it conjugates Leu from its aminoacyl-tRNA to the N-termini of proteins containing an N-terminal aspartate or glutamate. The sequence is that of Aspartate/glutamate leucyltransferase from Allorhizobium ampelinum (strain ATCC BAA-846 / DSM 112012 / S4) (Agrobacterium vitis (strain S4)).